The primary structure comprises 104 residues: Phosphoribosyl-ATP pyrophosphatase (104 aa).

It belongs to the PRA-PH family.

It localises to the cytoplasm. It carries out the reaction 1-(5-phospho-beta-D-ribosyl)-ATP + H2O = 1-(5-phospho-beta-D-ribosyl)-5'-AMP + diphosphate + H(+). It participates in amino-acid biosynthesis; L-histidine biosynthesis; L-histidine from 5-phospho-alpha-D-ribose 1-diphosphate: step 2/9. The sequence is that of Phosphoribosyl-ATP pyrophosphatase from Rhizobium rhizogenes (strain K84 / ATCC BAA-868) (Agrobacterium radiobacter).